Reading from the N-terminus, the 157-residue chain is Protein Smg (157 aa).

The protein belongs to the Smg family.

The sequence is that of Protein Smg from Buchnera aphidicola subsp. Acyrthosiphon pisum (strain Tuc7).